A 447-amino-acid polypeptide reads, in one-letter code: Probable glycosyltransferase 7 (447 aa).

Residues 1-31 form a disordered region; it reads MRATTGARHLHPPWRRGLRHHRQSTMPPRAS. The Cytoplasmic segment spans residues 1–37; sequence MRATTGARHLHPPWRRGLRHHRQSTMPPRASRGRLAD. Residues 8-23 are compositionally biased toward basic residues; that stretch reads RHLHPPWRRGLRHHRQ. Residues 38–60 traverse the membrane as a helical; Signal-anchor for type II membrane protein segment; that stretch reads AALFTAGAVLGSVLLLTLASPFS. The Lumenal segment spans residues 61 to 447; it reads SSSSPSSGVG…LPFDHPTQTA (387 aa). N-linked (GlcNAc...) asparagine glycans are attached at residues N285 and N329.

It belongs to the glycosyltransferase 34 family.

It localises to the golgi apparatus membrane. In terms of biological role, probable glycosyltransferase that may be involved in the biosynthesis of xyloglucan. This is Probable glycosyltransferase 7 from Oryza sativa subsp. indica (Rice).